A 75-amino-acid polypeptide reads, in one-letter code: Putative antitoxin VapB29 (75 aa).

Functionally, possibly the antitoxic component of a type II toxin-antitoxin (TA) system. Its cognate toxin is VapC29 (Potential). This Mycobacterium tuberculosis (strain CDC 1551 / Oshkosh) protein is Putative antitoxin VapB29 (vapB29).